We begin with the raw amino-acid sequence, 600 residues long: DNA polymerase alpha subunit B (600 aa).

Positions 107-165 (ETLLSSYTTPSKGPLKRVSSTPETPLTKRSVAARSPRQLLSPSSFSPSATPSQKYTSRT) are disordered. Phosphoserine is present on Ser126. Phosphothreonine occurs at positions 127 and 130. The segment covering 139–159 (ARSPRQLLSPSSFSPSATPSQ) has biased composition (low complexity). Residues Ser141, Ser147, Ser152, and Ser154 each carry the phosphoserine modification.

This sequence belongs to the DNA polymerase alpha subunit B family. In terms of assembly, component of the alpha DNA polymerase complex (also known as the alpha DNA polymerase-primase complex) consisting of four subunits: the catalytic subunit POLA1, the regulatory subunit POLA2, and the primase complex subunits PRIM1 and PRIM2 respectively. Within the complex, POLA1 directly interacts with PRIM2. Post-translationally, phosphorylated in a cell cycle-dependent manner, in G2/M phase.

It localises to the nucleus. Its function is as follows. Accessory subunit of the DNA polymerase alpha complex (also known as the alpha DNA polymerase-primase complex) which plays an essential role in the initiation of DNA synthesis. During the S phase of the cell cycle, the DNA polymerase alpha complex (composed of a catalytic subunit POLA1, an accessory subunit POLA2 and two primase subunits, the catalytic subunit PRIM1 and the regulatory subunit PRIM2) is recruited to DNA at the replicative forks via direct interactions with MCM10 and WDHD1. The primase subunit of the polymerase alpha complex initiates DNA synthesis by oligomerising short RNA primers on both leading and lagging strands. These primers are initially extended by the polymerase alpha catalytic subunit and subsequently transferred to polymerase delta and polymerase epsilon for processive synthesis on the lagging and leading strand, respectively. This Mus musculus (Mouse) protein is DNA polymerase alpha subunit B (Pola2).